Here is a 768-residue protein sequence, read N- to C-terminus: Gephyrin (768 aa).

Residues 14-166 form an MPT Mo-transferase region; that stretch reads QIRVGVLTVS…LPGSKKGSQE (153 aa). The segment at 153–348 is interaction with GABARAP; it reads LIINLPGSKK…VDITKVARRH (196 aa). Disordered stretches follow at residues 194–245 and 273–316; these read DELE…DSSS and TASL…ASRV. Pro residues predominate over residues 200-212; sequence PSPPPPLSPPPTT. Residues Ser201 and Ser207 each carry the phosphoserine modification. Thr211 is subject to Phosphothreonine. Phosphoserine is present on Ser213. Residue Cys225 is the site of S-palmitoyl cysteine attachment. A compositionally biased stretch (polar residues) spans 274–299; the sequence is ASLSTTPSESPRAQATSRLSTASCPT. Ser275 carries the phosphoserine modification. Thr278 and Thr279 each carry phosphothreonine. A phosphoserine mark is found at Ser281 and Ser283. The S-palmitoyl cysteine moiety is linked to residue Cys297. An MPT adenylyltransferase region spans residues 326 to 768; sequence SSKENILRAS…VVDVMVIGRL (443 aa). Ser337 is subject to Phosphoserine.

This sequence in the N-terminal section; belongs to the MoaB/Mog family. The protein in the C-terminal section; belongs to the MoeA family. As to quaternary structure, homotrimer, homodimer and homooligomer. Interacts with SRGAP2 (via SH3 domain). Interacts with GLRB. Interacts with GABARAP. Interacts with GABRA3. GABRA3 and GLRB occupy overlapping binding sites. Interacts with ARHGAP32; IQSEC3, INSYN1 and INSYN2A. The cofactor is Mg(2+). In terms of processing, phosphorylated. Palmitoylated. Palmitoylation is stimulated by GABA type A receptors activity. Palmitoylation by ZDHHC12 regulates clustering at synapses. In terms of tissue distribution, expressed in tissues including spinal cord, brain, liver, kidney and lung.

The protein localises to the postsynaptic cell membrane. Its subcellular location is the cell membrane. It localises to the cytoplasm. The protein resides in the cytosol. It is found in the cytoskeleton. The protein localises to the cell projection. Its subcellular location is the dendrite. It localises to the postsynaptic density. The catalysed reaction is molybdopterin + ATP + H(+) = adenylyl-molybdopterin + diphosphate. It carries out the reaction adenylyl-molybdopterin + molybdate = Mo-molybdopterin + AMP + H(+). It participates in cofactor biosynthesis; molybdopterin biosynthesis. With respect to regulation, inhibited by copper and tungsten. Microtubule-associated protein involved in membrane protein-cytoskeleton interactions. It is thought to anchor the inhibitory glycine receptor (GLYR) to subsynaptic microtubules. Acts as a major instructive molecule at inhibitory synapses, where it also clusters GABA type A receptors. Its function is as follows. Also has a catalytic activity and catalyzes two steps in the biosynthesis of the molybdenum cofactor. In the first step, molybdopterin is adenylated. Subsequently, molybdate is inserted into adenylated molybdopterin and AMP is released. This chain is Gephyrin (Gphn), found in Rattus norvegicus (Rat).